Consider the following 160-residue polypeptide: uncharacterized protein (160 aa).

An N-terminal signal peptide occupies residues 1 to 18 (MELLSLAILSSFFAVANQ).

This is an uncharacterized protein from Caenorhabditis elegans.